We begin with the raw amino-acid sequence, 300 residues long: Type II restriction enzyme HindIII (300 aa).

It carries out the reaction Endonucleolytic cleavage of DNA to give specific double-stranded fragments with terminal 5'-phosphates.. Functionally, a P subtype restriction enzyme that recognizes the double-stranded sequence 5'-AAGCTT-3' and cleaves after A-1. This is Type II restriction enzyme HindIII from Haemophilus influenzae (strain ATCC 51907 / DSM 11121 / KW20 / Rd).